Here is a 233-residue protein sequence, read N- to C-terminus: Flagellar calcium-binding protein TB-17 (233 aa).

Positions 1-11 are enriched in polar residues; the sequence is MGCSGSKNASN. The segment at 1-29 is disordered; it reads MGCSGSKNASNPKDGAASKGGKDGKTTAD. A compositionally biased stretch (basic and acidic residues) spans 20–29; sequence GGKDGKTTAD. EF-hand domains follow at residues 48-83, 130-165, and 167-202; these read ESKS…ILKL, YDIF…LKEW, and VDIT…KKLQ. Asp-61, Asn-63, Thr-65, Lys-67, Glu-72, Asp-143, Asp-145, Ser-147, Glu-154, Asp-180, Asn-182, Ser-184, and Glu-191 together coordinate Ca(2+). The segment at 203–233 is disordered; the sequence is VSGDPDDEENGANEGDGANAGDGVPAAEGSA. A compositionally biased stretch (low complexity) spans 214 to 225; that stretch reads ANEGDGANAGDG.

The protein belongs to the calflagin family.

The protein resides in the cell projection. Its subcellular location is the cilium. It is found in the flagellum. May contribute to the rapid motility of the trypanosomes, playing a role either in flagellar structure or in calcium metabolism. Could alternate between a GDP-bound inactive form to a calcium/GTP-bound active form. The protein is Flagellar calcium-binding protein TB-17 (FCABP) of Trypanosoma brucei brucei.